Consider the following 98-residue polypeptide: Integration host factor subunit alpha (98 aa).

Residues 49–71 (FGNFDLRDKNQRPGRNPKTGEDI) are disordered.

The protein belongs to the bacterial histone-like protein family. As to quaternary structure, heterodimer of an alpha and a beta chain.

Its function is as follows. This protein is one of the two subunits of integration host factor, a specific DNA-binding protein that functions in genetic recombination as well as in transcriptional and translational control. This chain is Integration host factor subunit alpha, found in Shewanella amazonensis (strain ATCC BAA-1098 / SB2B).